The sequence spans 188 residues: UPF0200 protein M1627_1244 (188 aa).

Residue 15–22 coordinates ATP; sequence GMPGSGKS.

This sequence belongs to the UPF0200 family.

The sequence is that of UPF0200 protein M1627_1244 from Saccharolobus islandicus (strain M.16.27) (Sulfolobus islandicus).